The sequence spans 372 residues: Glutamate 5-kinase (372 aa).

Residue lysine 14 coordinates ATP. Substrate is bound by residues serine 54, aspartate 141, and asparagine 153. Residues 173–174 and 215–221 contribute to the ATP site; these read TD and TGGMATK. Residues 280-358 form the PUA domain; the sequence is KGKLVLDVGA…DEIESLLGYD (79 aa).

It belongs to the glutamate 5-kinase family.

It localises to the cytoplasm. The catalysed reaction is L-glutamate + ATP = L-glutamyl 5-phosphate + ADP. The protein operates within amino-acid biosynthesis; L-proline biosynthesis; L-glutamate 5-semialdehyde from L-glutamate: step 1/2. Functionally, catalyzes the transfer of a phosphate group to glutamate to form L-glutamate 5-phosphate. This Shewanella woodyi (strain ATCC 51908 / MS32) protein is Glutamate 5-kinase.